We begin with the raw amino-acid sequence, 261 residues long: Phosphatidylglycerol--prolipoprotein diacylglyceryl transferase (261 aa).

A run of 3 helical transmembrane segments spans residues 20–40 (LAIHWYAIFIVGGAALAVWLA), 54–74 (IIDFVLFAFPLGIVGARLYYV), and 94–114 (GGGAIYGSLIAGAIVLFVFSY). R139 serves as a coordination point for a 1,2-diacyl-sn-glycero-3-phospho-(1'-sn-glycerol). The next 3 membrane-spanning stretches (helical) occupy residues 175–195 (MPTFLFESIGTLSGFILVMVF), 205–225 (GDIFSFYLVWYGAVRFIVEGM), and 235–255 (ARVSQWLSVLLVIVGLVLFIY).

It belongs to the Lgt family.

The protein resides in the cell membrane. The enzyme catalyses L-cysteinyl-[prolipoprotein] + a 1,2-diacyl-sn-glycero-3-phospho-(1'-sn-glycerol) = an S-1,2-diacyl-sn-glyceryl-L-cysteinyl-[prolipoprotein] + sn-glycerol 1-phosphate + H(+). Its pathway is protein modification; lipoprotein biosynthesis (diacylglyceryl transfer). In terms of biological role, catalyzes the transfer of the diacylglyceryl group from phosphatidylglycerol to the sulfhydryl group of the N-terminal cysteine of a prolipoprotein, the first step in the formation of mature lipoproteins. This is Phosphatidylglycerol--prolipoprotein diacylglyceryl transferase from Lactococcus lactis subsp. lactis (strain IL1403) (Streptococcus lactis).